The chain runs to 560 residues: DNA ligase B (560 aa).

The N6-AMP-lysine intermediate role is filled by K124.

It belongs to the NAD-dependent DNA ligase family. LigB subfamily.

It catalyses the reaction NAD(+) + (deoxyribonucleotide)n-3'-hydroxyl + 5'-phospho-(deoxyribonucleotide)m = (deoxyribonucleotide)n+m + AMP + beta-nicotinamide D-nucleotide.. Catalyzes the formation of phosphodiester linkages between 5'-phosphoryl and 3'-hydroxyl groups in double-stranded DNA using NAD as a coenzyme and as the energy source for the reaction. The polypeptide is DNA ligase B (Citrobacter koseri (strain ATCC BAA-895 / CDC 4225-83 / SGSC4696)).